Consider the following 315-residue polypeptide: Olfactory receptor 10H5 (315 aa).

Residues 1 to 25 lie on the Extracellular side of the membrane; it reads MQGLNHTSVSEFILVGFSAFPHLQL. The N-linked (GlcNAc...) asparagine glycan is linked to Asn-5. The helical transmembrane segment at 26–46 threads the bilayer; it reads MLFLLFLLMYLFTLLGNLLIM. At 47 to 54 the chain is on the cytoplasmic side; sequence ATVWSERS. Residues 55–75 form a helical membrane-spanning segment; it reads LHMPMYLFLCALSITEILYTV. Over 76 to 99 the chain is Extracellular; that stretch reads AIIPRMLADLLSTQRSIAFLACAS. The cysteines at positions 97 and 189 are disulfide-linked. A helical membrane pass occupies residues 100–120; it reads QMFFSFSFGFTHSFLLTVMGY. The Cytoplasmic segment spans residues 121 to 139; that stretch reads DRYVAICHPLRYNVLMSLR. Residues 140-160 traverse the membrane as a helical segment; sequence GCTCRVGCSWAGGLVMGMVVT. Over 161-197 the chain is Extracellular; the sequence is SAIFHLAFCGHKEIHHFFCHVPPLLKLACGDDVLVVA. A helical transmembrane segment spans residues 198-218; it reads KGVGLVCITALLGCFLLILLS. Residues 219–238 lie on the Cytoplasmic side of the membrane; sequence YAFIVAAILKIPSAEGRNKA. Residues 239-259 traverse the membrane as a helical segment; that stretch reads FSTCASHLTVVVVHYGFASVI. Topologically, residues 260–272 are extracellular; that stretch reads YLKPKGPQSPEGD. Residues 273 to 293 traverse the membrane as a helical segment; that stretch reads TLMGITYTVLTPFLSPIIFSL. Topologically, residues 294-315 are cytoplasmic; the sequence is RNKELKVAMKKTCFTKLFPQNC.

It belongs to the G-protein coupled receptor 1 family.

The protein localises to the cell membrane. Odorant receptor. The protein is Olfactory receptor 10H5 (OR10H5) of Homo sapiens (Human).